We begin with the raw amino-acid sequence, 113 residues long: MNTVRVTFLLVFVLAVSLGQADKDENRMEMQEKTEQGKSYLDFAENLLLQKLEELEAKLLEEDSEESRNSRQKRCIGEGVPCDENDPRCCSGLVCLKPTLHGIWYKSYYCYRK.

The signal sequence occupies residues 1 to 21 (MNTVRVTFLLVFVLAVSLGQA). Positions 22–74 (DKDENRMEMQEKTEQGKSYLDFAENLLLQKLEELEAKLLEEDSEESRNSRQKR) are excised as a propeptide. The tract at residues 61–83 (EEDSEESRNSRQKRCIGEGVPCD) is disordered. Disulfide bonds link cysteine 75–cysteine 90, cysteine 82–cysteine 95, and cysteine 89–cysteine 110.

It belongs to the neurotoxin 14 (magi-1) family. 01 (HNTX-16) subfamily. Expressed by the venom gland.

The protein resides in the secreted. Its function is as follows. Probable ion channel inhibitor. This is U11-theraphotoxin-Hhn1f from Cyriopagopus hainanus (Chinese bird spider).